Here is a 630-residue protein sequence, read N- to C-terminus: Pentatricopeptide repeat-containing protein At1g63130, mitochondrial (630 aa).

The N-terminal 22 residues, 1–22, are a transit peptide targeting the mitochondrion; the sequence is MRRLFAISSTGNRFVHRSLLGK. PPR repeat units follow at residues 80 to 114, 115 to 149, 150 to 184, 185 to 219, 220 to 254, 255 to 289, 290 to 324, 325 to 359, 360 to 394, 395 to 429, 430 to 464, 465 to 499, 500 to 534, 535 to 569, and 570 to 604; these read SIVE…GISH, NLYT…GYEP, DIVT…GYQP, DSFT…GCQP, DLVT…KIEP, GVVI…GIRP, NVVT…KINP, NVVT…SIDP, DIFT…DCFP, NVVT…GLVG, NTVT…GVLP, DIMT…KMEP, DIYT…GVKP, NVVT…GPLP, and DSGT…RFVG.

It belongs to the PPR family. P subfamily.

Its subcellular location is the mitochondrion. The polypeptide is Pentatricopeptide repeat-containing protein At1g63130, mitochondrial (Arabidopsis thaliana (Mouse-ear cress)).